Consider the following 381-residue polypeptide: Succinyl-diaminopimelate desuccinylase (381 aa).

Zn(2+) is bound at residue His72. The active site involves Asp74. A Zn(2+)-binding site is contributed by Asp105. Glu139 functions as the Proton acceptor in the catalytic mechanism. Positions 140, 168, and 354 each coordinate Zn(2+).

This sequence belongs to the peptidase M20A family. DapE subfamily. In terms of assembly, homodimer. Zn(2+) is required as a cofactor. Co(2+) serves as cofactor.

It catalyses the reaction N-succinyl-(2S,6S)-2,6-diaminopimelate + H2O = (2S,6S)-2,6-diaminopimelate + succinate. Its pathway is amino-acid biosynthesis; L-lysine biosynthesis via DAP pathway; LL-2,6-diaminopimelate from (S)-tetrahydrodipicolinate (succinylase route): step 3/3. Functionally, catalyzes the hydrolysis of N-succinyl-L,L-diaminopimelic acid (SDAP), forming succinate and LL-2,6-diaminopimelate (DAP), an intermediate involved in the bacterial biosynthesis of lysine and meso-diaminopimelic acid, an essential component of bacterial cell walls. This is Succinyl-diaminopimelate desuccinylase from Shewanella sp. (strain MR-4).